The sequence spans 79 residues: Probable [Fe-S]-dependent transcriptional repressor (79 aa).

Positions 56, 61, 64, and 71 each coordinate iron-sulfur cluster.

This sequence belongs to the FeoC family.

Functionally, may function as a transcriptional regulator that controls feoABC expression. The protein is Probable [Fe-S]-dependent transcriptional repressor of Klebsiella pneumoniae (strain 342).